Here is a 154-residue protein sequence, read N- to C-terminus: Ribonuclease H (154 aa).

The 141-residue stretch at 1-141 (MKRIEAYTDG…ADELAREGME (141 aa)) folds into the RNase H type-1 domain. The Mg(2+) site is built by Asp9, Glu47, Asp69, and Asp133.

Belongs to the RNase H family. Monomer. Mg(2+) is required as a cofactor.

The protein localises to the cytoplasm. It carries out the reaction Endonucleolytic cleavage to 5'-phosphomonoester.. Functionally, endonuclease that specifically degrades the RNA of RNA-DNA hybrids. The chain is Ribonuclease H from Brucella anthropi (strain ATCC 49188 / DSM 6882 / CCUG 24695 / JCM 21032 / LMG 3331 / NBRC 15819 / NCTC 12168 / Alc 37) (Ochrobactrum anthropi).